The primary structure comprises 216 residues: MDDSEKDFNLKVVLVSFKQCLTDKGEVLLDHYIAGWKGLVRFLNSLGAVFSFISKDVVAKLQIMERLRSSPQSEHYASLQSMVAYEVSNKLVDMDHRSHPRHPHSGCRTVLRLHRALHWLQLFLDGLRTSSEDARTSTLCSEAYNATLANYHSWIVRQAVTVAFCALPSRKVFLEAMNMESTEQAVEMLGEALPFIEHVYDISQKLYAEHSLLDLP.

Positions 56, 60, 108, 112, and 152 each coordinate an N-acylsphingoid base 1-phosphate.

It belongs to the GLTP family.

It localises to the cytoplasm. Its subcellular location is the cytosol. The protein localises to the golgi apparatus. The protein resides in the trans-Golgi network membrane. It is found in the cell membrane. It localises to the endosome membrane. Its subcellular location is the nucleus outer membrane. The catalysed reaction is N-(hexadecanoyl)-sphing-4-enine-1-phosphate(in) = N-(hexadecanoyl)-sphing-4-enine-1-phosphate(out). It carries out the reaction N-(9Z-octadecenoyl)-sphing-4-enine-1-phosphate(in) = N-(9Z-octadecenoyl)-sphing-4-enine-1-phosphate(out). In terms of biological role, mediates the intracellular transfer of ceramide-1-phosphate (C1P) between organelle membranes and the cell membrane. Required for normal structure of the Golgi stacks. Can bind phosphoceramides with a variety of aliphatic chains, but has a preference for lipids with saturated C16:0 or monounsaturated C18:1 aliphatic chains, and is inefficient with phosphoceramides containing lignoceryl (C24:0). Plays a role in the regulation of the cellular levels of ceramide-1-phosphate, and thereby contributes to the regulation of phospholipase PLA2G4A activity and the release of arachidonic acid. Has no activity with galactosylceramide, lactosylceramide, sphingomyelin, phosphatidylcholine, phosphatidic acid and ceramide. C1P transfer is stimulated by phosphatidylserine in C1P source vesicles. Regulates autophagy, inflammasome mediated IL1B and IL18 processing, and pyroptosis, but not apoptosis. This chain is Ceramide-1-phosphate transfer protein, found in Mus musculus (Mouse).